Here is a 430-residue protein sequence, read N- to C-terminus: Asparagine--tRNA ligase (430 aa).

The protein belongs to the class-II aminoacyl-tRNA synthetase family. In terms of assembly, homodimer.

The protein localises to the cytoplasm. It carries out the reaction tRNA(Asn) + L-asparagine + ATP = L-asparaginyl-tRNA(Asn) + AMP + diphosphate + H(+). The chain is Asparagine--tRNA ligase from Listeria monocytogenes serovar 1/2a (strain ATCC BAA-679 / EGD-e).